The following is a 394-amino-acid chain: Fructose-bisphosphate aldolase, chloroplastic (394 aa).

A chloroplast-targeting transit peptide spans 1 to 46 (MASASLLKTSPVLDNPEFLKGQTLRIPSVAGVRFTPSGSSSLTVRA). 2 residues coordinate substrate: Arg-93 and Lys-183. Glu-223 (proton acceptor) is an active-site residue. Lys-265 serves as the catalytic Schiff-base intermediate with dihydroxyacetone-P.

This sequence belongs to the class I fructose-bisphosphate aldolase family.

Its subcellular location is the plastid. It localises to the chloroplast. The enzyme catalyses beta-D-fructose 1,6-bisphosphate = D-glyceraldehyde 3-phosphate + dihydroxyacetone phosphate. Its pathway is carbohydrate degradation; glycolysis; D-glyceraldehyde 3-phosphate and glycerone phosphate from D-glucose: step 4/4. This is Fructose-bisphosphate aldolase, chloroplastic from Spinacia oleracea (Spinach).